Here is a 326-residue protein sequence, read N- to C-terminus: Phospholipid scramblase 4 (326 aa).

Residues 1–32 are disordered; sequence MSGLVPTAPEQPTEEMENQIKSPTAVPDAPPD. Residues 1–94 are proline-rich domain (PRD); sequence MSGLVPTAPE…PVTNQPAPIM (94 aa). Over 1–299 the chain is Cytoplasmic; sequence MSGLVPTAPE…IRFPLALDVK (299 aa). An SH3-binding 1 motif is present at residues 18–25; that stretch reads NQIKSPTA. Residues 30-33 carry the PPxY motif motif; sequence PPDY. An SH3-binding 2 motif is present at residues 41 to 49; the sequence is PAGPVASPS. Phosphotyrosine; by ABL is present on residues Y79 and Y84. The SH3-binding 3 signature appears at 94 to 102; sequence MWMAGPAPV. 5 S-palmitoyl cysteine lipidation sites follow: C193, C194, C195, C197, and C198. Residues 300–316 form a helical membrane-spanning segment; sequence MKAMIFGSCFLIDFMYF. Residues 317 to 326 are Extracellular-facing; that stretch reads ERPPPRRMSR.

It belongs to the phospholipid scramblase family. In terms of assembly, interacts with PDCD6. Interacts with KPNA2; this interaction mediates the nucleus import of PLSCR4. Requires Ca(2+) as cofactor. Mg(2+) serves as cofactor. The cofactor is Zn(2+).

It is found in the cell membrane. The protein resides in the nucleus. It carries out the reaction a 1,2-diacyl-sn-glycero-3-phosphocholine(in) = a 1,2-diacyl-sn-glycero-3-phosphocholine(out). The catalysed reaction is a 1,2-diacyl-sn-glycero-3-phospho-L-serine(in) = a 1,2-diacyl-sn-glycero-3-phospho-L-serine(out). Catalyzes metal ion-induced ATP-independent rapid bidirectional and non-specific movement of phospholipids (lipid scrambling or lipid flip-flop) between the inner and outer leaflet of the plasma membrane and participates in the redistribution of phospholipids between membrane leaflets. Metal ions bind to the calcium-binding site and induce conformation change in the protein. Has a greater affi nity for Ca(2+) than Mg(2+) and Zn(2+). The chain is Phospholipid scramblase 4 from Mus musculus (Mouse).